Here is a 104-residue protein sequence, read N- to C-terminus: L-rhamnose mutarotase (104 aa).

Tyrosine 18 contributes to the substrate binding site. The active-site Proton donor is the histidine 22. Residues tyrosine 41 and 76 to 77 (WW) each bind substrate.

This sequence belongs to the rhamnose mutarotase family. As to quaternary structure, homodimer.

The protein resides in the cytoplasm. The catalysed reaction is alpha-L-rhamnose = beta-L-rhamnose. It functions in the pathway carbohydrate metabolism; L-rhamnose metabolism. Involved in the anomeric conversion of L-rhamnose. The polypeptide is L-rhamnose mutarotase (Mannheimia succiniciproducens (strain KCTC 0769BP / MBEL55E)).